The following is a 190-amino-acid chain: Guanylate kinase (190 aa).

The region spanning 8-188 (GRLVILAGPS…AVKAIEDVLL (181 aa)) is the Guanylate kinase-like domain. 15-22 (GPSAVGKS) provides a ligand contact to ATP.

Belongs to the guanylate kinase family.

Its subcellular location is the cytoplasm. The enzyme catalyses GMP + ATP = GDP + ADP. Functionally, essential for recycling GMP and indirectly, cGMP. This is Guanylate kinase from Corynebacterium glutamicum (strain ATCC 13032 / DSM 20300 / JCM 1318 / BCRC 11384 / CCUG 27702 / LMG 3730 / NBRC 12168 / NCIMB 10025 / NRRL B-2784 / 534).